We begin with the raw amino-acid sequence, 305 residues long: Diacylglycerol kinase (305 aa).

Residues Met1–Tyr132 enclose the DAGKc domain. Residues Asn10–Gly14, Thr41, Gly67–Glu73, and Thr94 each bind ATP. Residues Lys213, Asp216, and Tyr218 each contribute to the Mg(2+) site. Glu273 serves as the catalytic Proton acceptor.

It belongs to the diacylglycerol/lipid kinase family. Homodimer. The cofactor is Mg(2+).

The enzyme catalyses a 1,2-diacyl-sn-glycerol + ATP = a 1,2-diacyl-sn-glycero-3-phosphate + ADP + H(+). Its function is as follows. Catalyzes the phosphorylation of diacylglycerol (DAG) into phosphatidic acid. Is a key enzyme involved in the production of lipoteichoic acid by reintroducing DAG formed from the breakdown of membrane phospholipids into the phosphatidylglycerol biosynthetic pathway. This Staphylococcus saprophyticus subsp. saprophyticus (strain ATCC 15305 / DSM 20229 / NCIMB 8711 / NCTC 7292 / S-41) protein is Diacylglycerol kinase (dagK).